The following is a 73-amino-acid chain: Conotoxin CnIIIE (73 aa).

The first 19 residues, 1-19, serve as a signal peptide directing secretion; the sequence is MSKLGVLLTICLLLFPLTA. The propeptide occupies 20–49; that stretch reads LPMDGDQSVDRPAERMQDDISSEQYPLFNQ. 3 cysteine pairs are disulfide-bonded: cysteine 53/cysteine 72, cysteine 54/cysteine 70, and cysteine 60/cysteine 73.

It belongs to the conotoxin M superfamily. As to expression, expressed by the venom duct.

Its subcellular location is the secreted. Shows a paralytic effect in fish. This chain is Conotoxin CnIIIE, found in Conus consors (Singed cone).